The primary structure comprises 266 residues: 5'-nucleotidase SurE (266 aa).

D8, D9, S39, and N95 together coordinate a divalent metal cation.

It belongs to the SurE nucleotidase family. A divalent metal cation serves as cofactor.

It is found in the cytoplasm. The enzyme catalyses a ribonucleoside 5'-phosphate + H2O = a ribonucleoside + phosphate. In terms of biological role, nucleotidase that shows phosphatase activity on nucleoside 5'-monophosphates. The chain is 5'-nucleotidase SurE from Syntrophus aciditrophicus (strain SB).